The following is a 263-amino-acid chain: Small ribosomal subunit protein eS1 (263 aa).

Residues 235–254 (HGEGGGGKREAGDKSERPEG) are compositionally biased toward basic and acidic residues. The interval 235 to 263 (HGEGGGGKREAGDKSERPEGYEPPVQESV) is disordered.

This sequence belongs to the eukaryotic ribosomal protein eS1 family. As to quaternary structure, component of the small ribosomal subunit. Mature ribosomes consist of a small (40S) and a large (60S) subunit. The 40S subunit contains about 33 different proteins and 1 molecule of RNA (18S). The 60S subunit contains about 49 different proteins and 3 molecules of RNA (28S, 5.8S and 5S).

Its subcellular location is the cytoplasm. In Bombyx mandarina (Wild silk moth), this protein is Small ribosomal subunit protein eS1.